Reading from the N-terminus, the 125-residue chain is Glycine cleavage system H protein (125 aa).

Positions 19–101 constitute a Lipoyl-binding domain; that stretch reads EVTVGITDHA…YHEGWLVKLK (83 aa). An N6-lipoyllysine modification is found at lysine 60.

This sequence belongs to the GcvH family. As to quaternary structure, the glycine cleavage system is composed of four proteins: P, T, L and H. The cofactor is (R)-lipoate.

Its function is as follows. The glycine cleavage system catalyzes the degradation of glycine. The H protein shuttles the methylamine group of glycine from the P protein to the T protein. The chain is Glycine cleavage system H protein from Legionella pneumophila (strain Corby).